A 37-amino-acid chain; its full sequence is L-amino-acid oxidase (37 aa).

It belongs to the flavin monoamine oxidase family. FIG1 subfamily. In terms of assembly, homodimer; non-covalently linked. FAD is required as a cofactor. Post-translationally, N-Glycosylated. Expressed by the venom gland.

The protein localises to the secreted. It catalyses the reaction an L-alpha-amino acid + O2 + H2O = a 2-oxocarboxylate + H2O2 + NH4(+). It carries out the reaction L-leucine + O2 + H2O = 4-methyl-2-oxopentanoate + H2O2 + NH4(+). The catalysed reaction is L-phenylalanine + O2 + H2O = 3-phenylpyruvate + H2O2 + NH4(+). The enzyme catalyses L-tryptophan + O2 + H2O = indole-3-pyruvate + H2O2 + NH4(+). It catalyses the reaction L-methionine + O2 + H2O = 4-methylsulfanyl-2-oxobutanoate + H2O2 + NH4(+). It carries out the reaction L-isoleucine + O2 + H2O = (S)-3-methyl-2-oxopentanoate + H2O2 + NH4(+). The catalysed reaction is L-arginine + O2 + H2O = 5-guanidino-2-oxopentanoate + H2O2 + NH4(+). The enzyme catalyses L-histidine + O2 + H2O = 3-(imidazol-5-yl)pyruvate + H2O2 + NH4(+). It catalyses the reaction L-valine + O2 + H2O = 3-methyl-2-oxobutanoate + H2O2 + NH4(+). In terms of biological role, catalyzes an oxidative deamination of predominantly hydrophobic and aromatic L-amino acids, thus producing hydrogen peroxide that may contribute to the diverse toxic effects of this enzyme. Is highly active on L-Leu, L-Met, moderately active on L-Arg, L-Trp, L-Phe, L-Val, L-His, and L-Ile, and is weakly or not active on L-Cys, L-Lys, L-Ala, L-Thr, L-Asp, L-Ser, and L-Pro. Exhibits diverse biological activities, such as hemorrhage, edema, apoptosis of vascular endothelial cells or tumor cell lines, as well as regulation of platelet aggregation. Effects of snake L-amino oxidases on platelets are controversial, since they either induce aggregation or inhibit agonist-induced aggregation. These different effects are probably due to different experimental conditions. This protein induce hemolysis and has antibacterial and antiparasitic activities (against the Gram-positive S.aureus). Tested in vivo, this protein significantly inhibits Ehrlich ascite tumors growth and induces an influx of polymorphonuclear cells, as well as spontaneous liberation of hydrogen peroxide from peritoneal macrophages. This is L-amino-acid oxidase from Bothrops jararaca (Jararaca).